A 197-amino-acid polypeptide reads, in one-letter code: Peptide deformylase (197 aa).

Fe cation-binding residues include Cys106 and His148. Glu149 is an active-site residue. His152 provides a ligand contact to Fe cation.

It belongs to the polypeptide deformylase family. Fe(2+) is required as a cofactor.

It carries out the reaction N-terminal N-formyl-L-methionyl-[peptide] + H2O = N-terminal L-methionyl-[peptide] + formate. Its function is as follows. Removes the formyl group from the N-terminal Met of newly synthesized proteins. Requires at least a dipeptide for an efficient rate of reaction. N-terminal L-methionine is a prerequisite for activity but the enzyme has broad specificity at other positions. The protein is Peptide deformylase of Mycolicibacterium paratuberculosis (strain ATCC BAA-968 / K-10) (Mycobacterium paratuberculosis).